A 318-amino-acid chain; its full sequence is Vomeronasal type-1 receptor A11 (318 aa).

Residues 1–32 (MSEILFFSPQPLFSHMMNKNSRLHTHSNIKNT) lie on the Extracellular side of the membrane. Residues 33 to 53 (FFSEIGIGISGNSFLLLFHIL) traverse the membrane as a helical segment. Residues 54-65 (KFIRGHRPRLTD) lie on the Cytoplasmic side of the membrane. Residues 66 to 86 (LPIGLLSLIHLLMLLLMAFIA) traverse the membrane as a helical segment. Residues 87 to 101 (TDIFISRRGWDGIIC) are Extracellular-facing. A disulfide bridge connects residues C101 and C188. The chain crosses the membrane as a helical span at residues 102 to 118 (KFLVYLYGVLRGLSLCT). At 119–147 (TSMLSVLQAIILSPRSSCLAKLKHKSPHH) the chain is on the cytoplasmic side. Residues 148–168 (ISCAIIFLSVLYMLISSHILL) form a helical membrane-spanning segment. Over 169-206 (SITATPNLTMNDFLYVSQSCSLLPLSYLVQSMYSTLLA) the chain is Extracellular. N175 is a glycosylation site (N-linked (GlcNAc...) asparagine). The helical transmembrane segment at 207–227 (LREVFLISLMVLSTLYMVVLL) threads the bilayer. Topologically, residues 228 to 254 (CRHRKQAQHLQGTSLSPKASAEQRATQ) are cytoplasmic. A helical transmembrane segment spans residues 255 to 275 (TILMLMTFFVLMSIFDSIVSC). Residues 276–285 (SRTMFLDDPT) are Extracellular-facing. A helical membrane pass occupies residues 286–306 (SYSIHIFVMHIYATVSPFVFM). The Cytoplasmic portion of the chain corresponds to 307-318 (STEKHIVNILRG).

The protein belongs to the G-protein coupled receptor 1 family.

Its subcellular location is the cell membrane. Functionally, putative pheromone receptor implicated in the regulation of social and reproductive behavior. This chain is Vomeronasal type-1 receptor A11, found in Mus musculus (Mouse).